Consider the following 291-residue polypeptide: Urease accessory protein UreD (291 aa).

It belongs to the UreD family. As to quaternary structure, ureD, UreF and UreG form a complex that acts as a GTP-hydrolysis-dependent molecular chaperone, activating the urease apoprotein by helping to assemble the nickel containing metallocenter of UreC. The UreE protein probably delivers the nickel.

It is found in the cytoplasm. Its function is as follows. Required for maturation of urease via the functional incorporation of the urease nickel metallocenter. The polypeptide is Urease accessory protein UreD (Acinetobacter baumannii (strain ACICU)).